The chain runs to 214 residues: Adenylate kinase (214 aa).

An ATP-binding site is contributed by 10–15; the sequence is GAGKGT. Positions 30 to 59 are NMP; sequence STGDMLRAAIKAGTELGKQAKAVIDAGQLV. AMP contacts are provided by residues threonine 31, arginine 36, 57–59, 85–88, and glutamine 92; these read QLV and GFPR. An LID region spans residues 122–159; the sequence is GRRAHLPSGRTYHVVYNPPKVEGKDDVTGEDLVVRDDD. ATP contacts are provided by residues arginine 123 and 132 to 133; that span reads TY. Residues arginine 156 and arginine 167 each coordinate AMP. Lysine 200 contributes to the ATP binding site.

This sequence belongs to the adenylate kinase family. Monomer.

It is found in the cytoplasm. It carries out the reaction AMP + ATP = 2 ADP. The protein operates within purine metabolism; AMP biosynthesis via salvage pathway; AMP from ADP: step 1/1. Functionally, catalyzes the reversible transfer of the terminal phosphate group between ATP and AMP. Plays an important role in cellular energy homeostasis and in adenine nucleotide metabolism. In Vibrio vulnificus (strain YJ016), this protein is Adenylate kinase.